Here is a 103-residue protein sequence, read N- to C-terminus: Large ribosomal subunit protein eL21 (103 aa).

This sequence belongs to the eukaryotic ribosomal protein eL21 family.

The protein is Large ribosomal subunit protein eL21 of Sulfolobus acidocaldarius (strain ATCC 33909 / DSM 639 / JCM 8929 / NBRC 15157 / NCIMB 11770).